The sequence spans 451 residues: Gamma-aminobutyric acid receptor subunit alpha-2 (451 aa).

The signal sequence occupies residues 1–28 (MKTKLNSSNMQLLLFVFLAWDPARLVLA). At 29–249 (NIQEDEAKNN…MTAHFHLKRK (221 aa)) the chain is on the extracellular side. Residue asparagine 38 is glycosylated (N-linked (GlcNAc...) asparagine). Position 94 (arginine 94) interacts with 4-aminobutanoate. N-linked (GlcNAc...) asparagine glycosylation is present at asparagine 138. 4-aminobutanoate is bound at residue threonine 157. Cysteine 166 and cysteine 180 are disulfide-bonded. Asparagine 201 is a glycosylation site (N-linked (GlcNAc...) asparagine). A helical membrane pass occupies residues 250–270 (IGYFVIQTYLPCIMTVILSQV). Residues 271-280 (SFWLNRESVP) are Cytoplasmic-facing. Residues 281-300 (ARTVFGVTTVLTMTTLSISA) form a helical membrane-spanning segment. The Extracellular portion of the chain corresponds to 301–311 (RNSLPKVAYAT). The helical transmembrane segment at 312-332 (AMDWFIAVCYAFVFSALIEFA) threads the bilayer. Residues 333–420 (TVNYFTKRGW…FNSVSKIDRM (88 aa)) are Cytoplasmic-facing. The chain crosses the membrane as a helical span at residues 421–441 (SRIVFPVLFGTFNLVYWATYL). Residues 442-451 (NREPVLGVSP) are Extracellular-facing.

Belongs to the ligand-gated ion channel (TC 1.A.9) family. Gamma-aminobutyric acid receptor (TC 1.A.9.5) subfamily. GABRA2 sub-subfamily. As to quaternary structure, heteropentamer, formed by a combination of alpha (GABRA1-6), beta (GABRB1-3), gamma (GABRG1-3), delta (GABRD), epsilon (GABRE), rho (GABRR1-3), pi (GABRP) and theta (GABRQ) subunits, each subunit exhibiting distinct physiological and pharmacological properties. Interacts with UBQLN1. Interacts with KIF21B. Interacts with LHFPL4. Interacts with SHISA7; interaction leads to the regulation of GABA(A) receptor trafficking, channel deactivation kinetics and pharmacology. Glycosylated.

Its subcellular location is the postsynaptic cell membrane. The protein localises to the cell membrane. The protein resides in the cytoplasmic vesicle membrane. It localises to the cell projection. It is found in the dendrite. The enzyme catalyses chloride(in) = chloride(out). Its activity is regulated as follows. Activated by pentobarbital. Inhibited by the antagonist bicuculline. In terms of biological role, alpha subunit of the heteropentameric ligand-gated chloride channel gated by gamma-aminobutyric acid (GABA), a major inhibitory neurotransmitter in the brain. GABA-gated chloride channels, also named GABA(A) receptors (GABAAR), consist of five subunits arranged around a central pore and contain GABA active binding site(s) located at the alpha and beta subunit interface(s). When activated by GABA, GABAARs selectively allow the flow of chloride anions across the cell membrane down their electrochemical gradient. Chloride influx into the postsynaptic neuron following GABAAR opening decreases the neuron ability to generate a new action potential, thereby reducing nerve transmission. The alpha-2 subunit exhibits synaptogenic activity together with beta-2 and very little to no activity together with beta-3, the gamma-2 subunit being necessary but not sufficient to induce rapid synaptic contacts formation. The chain is Gamma-aminobutyric acid receptor subunit alpha-2 (GABRA2) from Bos taurus (Bovine).